A 149-amino-acid chain; its full sequence is Large ribosomal subunit protein bL9 (149 aa).

It belongs to the bacterial ribosomal protein bL9 family.

Its function is as follows. Binds to the 23S rRNA. This chain is Large ribosomal subunit protein bL9, found in Chromobacterium violaceum (strain ATCC 12472 / DSM 30191 / JCM 1249 / CCUG 213 / NBRC 12614 / NCIMB 9131 / NCTC 9757 / MK).